A 275-amino-acid chain; its full sequence is Formamidopyrimidine-DNA glycosylase (275 aa).

The Schiff-base intermediate with DNA role is filled by proline 2. The Proton donor role is filled by glutamate 3. Lysine 58 functions as the Proton donor; for beta-elimination activity in the catalytic mechanism. The DNA site is built by histidine 93, arginine 111, and arginine 156. The FPG-type zinc-finger motif lies at phenylalanine 241–arginine 275. The Proton donor; for delta-elimination activity role is filled by arginine 265.

Belongs to the FPG family. Monomer. It depends on Zn(2+) as a cofactor.

The catalysed reaction is Hydrolysis of DNA containing ring-opened 7-methylguanine residues, releasing 2,6-diamino-4-hydroxy-5-(N-methyl)formamidopyrimidine.. It catalyses the reaction 2'-deoxyribonucleotide-(2'-deoxyribose 5'-phosphate)-2'-deoxyribonucleotide-DNA = a 3'-end 2'-deoxyribonucleotide-(2,3-dehydro-2,3-deoxyribose 5'-phosphate)-DNA + a 5'-end 5'-phospho-2'-deoxyribonucleoside-DNA + H(+). Involved in base excision repair of DNA damaged by oxidation or by mutagenic agents. Acts as a DNA glycosylase that recognizes and removes damaged bases. Has a preference for oxidized purines, such as 7,8-dihydro-8-oxoguanine (8-oxoG). Has AP (apurinic/apyrimidinic) lyase activity and introduces nicks in the DNA strand. Cleaves the DNA backbone by beta-delta elimination to generate a single-strand break at the site of the removed base with both 3'- and 5'-phosphates. This is Formamidopyrimidine-DNA glycosylase from Burkholderia ambifaria (strain MC40-6).